The primary structure comprises 874 residues: Isopimaradiene synthase, chloroplastic (874 aa).

Positions Met1 to Ile12 are enriched in polar residues. The segment at Met1–Thr20 is disordered. The transit peptide at Met1 to Ser37 directs the protein to the chloroplast. Asp407, Asp409, Asp626, Asp630, Asn770, and Glu778 together coordinate Mg(2+). The DXDD motif signature appears at Asp407–Asp410. Residues Asp626–Asp630 carry the DDXXD motif motif.

The protein belongs to the terpene synthase family. Tpsd subfamily. Mg(2+) is required as a cofactor. Requires Mn(2+) as cofactor.

The protein resides in the plastid. It localises to the chloroplast. The enzyme catalyses (+)-copalyl diphosphate = isopimara-8(14),15-diene + diphosphate. The protein operates within terpene metabolism; oleoresin biosynthesis. Functionally, terpene synthase (TPS) involved in the biosynthesis of diterpene natural products included in conifer oleoresin secretions and volatile emissions; these compounds contribute to biotic and abiotic stress defense against herbivores and pathogens. Catalyzes the conversion of (+)-copalyl diphosphate ((+)-CPP) to isopimaradiene. The sequence is that of Isopimaradiene synthase, chloroplastic from Picea sitchensis (Sitka spruce).